We begin with the raw amino-acid sequence, 85 residues long: Thioredoxin (85 aa).

Residues 1–85 enclose the Glutaredoxin domain; that stretch reads MSKVKIELFT…ALVEAIKKRL (85 aa). A disulfide bond links Cys-14 and Cys-17.

Belongs to the glutaredoxin family.

It is found in the cytoplasm. Acts to maintain redox homeostasis; functions as a protein disulfide reductase. This chain is Thioredoxin (trx), found in Methanocaldococcus jannaschii (strain ATCC 43067 / DSM 2661 / JAL-1 / JCM 10045 / NBRC 100440) (Methanococcus jannaschii).